Consider the following 254-residue polypeptide: MAYSKIRQPKLSDVIEQQLEFLILEGTLRPGEKLPPERELAKQFDVSRPSLREAIQRLEAKGLLLRRQGGGTFVQSSLWQSFSDPLVELLSDHPESQYDLLETRHALEGIAAYYAALRSTDEDKERIRELHHAIELAQQSGDLDAESNAVLQYQIAVTEAAHNVVLLHLLRCMEPMLAQNVRQNFELLYSRREMLPLVSSHRTRIFEAIMAGKPEEAREASHRHLAFIEEILLDRSREESRRERSLRRLEQRKN.

The 69-residue stretch at 9-77 (PKLSDVIEQQ…QGGGTFVQSS (69 aa)) folds into the HTH gntR-type domain. Residues 37–56 (ERELAKQFDVSRPSLREAIQ) constitute a DNA-binding region (H-T-H motif).

In terms of biological role, transcriptional repressor for the pyruvate dehydrogenase complex genes aceEF and lpd. This Escherichia coli O6:H1 (strain CFT073 / ATCC 700928 / UPEC) protein is Pyruvate dehydrogenase complex repressor (pdhR).